The sequence spans 356 residues: S-adenosylmethionine:tRNA ribosyltransferase-isomerase (356 aa).

This sequence belongs to the QueA family. Monomer.

It localises to the cytoplasm. The enzyme catalyses 7-aminomethyl-7-carbaguanosine(34) in tRNA + S-adenosyl-L-methionine = epoxyqueuosine(34) in tRNA + adenine + L-methionine + 2 H(+). It functions in the pathway tRNA modification; tRNA-queuosine biosynthesis. Transfers and isomerizes the ribose moiety from AdoMet to the 7-aminomethyl group of 7-deazaguanine (preQ1-tRNA) to give epoxyqueuosine (oQ-tRNA). This chain is S-adenosylmethionine:tRNA ribosyltransferase-isomerase, found in Chromohalobacter salexigens (strain ATCC BAA-138 / DSM 3043 / CIP 106854 / NCIMB 13768 / 1H11).